The following is a 437-amino-acid chain: Probable receptor-like serine/threonine-protein kinase At4g34500 (437 aa).

A helical transmembrane segment spans residues 25 to 45 (LVIAICSVFILLISLLIFLFV). The Protein kinase domain maps to 145 to 426 (FSDDNMIGEG…MLEAEDFPFR (282 aa)). Residues 151 to 159 (IGEGGYGVV) and K173 each bind ATP. Position 220 is a phosphotyrosine (Y220). Residue D273 is the Proton acceptor of the active site. S277 carries the post-translational modification Phosphoserine. A phosphothreonine mark is found at T307 and T312. Y320 is modified (phosphotyrosine).

It belongs to the protein kinase superfamily. Ser/Thr protein kinase family.

The protein resides in the cell membrane. It carries out the reaction L-seryl-[protein] + ATP = O-phospho-L-seryl-[protein] + ADP + H(+). It catalyses the reaction L-threonyl-[protein] + ATP = O-phospho-L-threonyl-[protein] + ADP + H(+). The sequence is that of Probable receptor-like serine/threonine-protein kinase At4g34500 from Arabidopsis thaliana (Mouse-ear cress).